Reading from the N-terminus, the 331-residue chain is Putative sigma L-dependent transcriptional regulator YplP (331 aa).

In terms of domain architecture, Sigma-54 factor interaction spans 12-213 (HLIGEHQTFL…LKNAADYMAA (202 aa)). 95-104 (AVRGTLFLDD) is an ATP binding site.

May play a role in cold adaptation. In Bacillus subtilis (strain 168), this protein is Putative sigma L-dependent transcriptional regulator YplP (yplP).